A 150-amino-acid chain; its full sequence is Histone H2B.2 (150 aa).

2 stretches are compositionally biased toward basic and acidic residues: residues 1-21 (MAPKAEKKPAEKKPAEEKAGE) and 33-49 (EKRLPASKGEKGGEGKK). The interval 1-58 (MAPKAEKKPAEKKPAEEKAGEKAPAAGKKPKAEKRLPASKGEKGGEGKKERGRKKAKK) is disordered. Lys-7 and Lys-34 each carry N6-acetyllysine. Lys-146 participates in a covalent cross-link: Glycyl lysine isopeptide (Lys-Gly) (interchain with G-Cter in ubiquitin).

It belongs to the histone H2B family. The nucleosome is a histone octamer containing two molecules each of H2A, H2B, H3 and H4 assembled in one H3-H4 heterotetramer and two H2A-H2B heterodimers. The octamer wraps approximately 147 bp of DNA. Post-translationally, can be acetylated to form H2BK6ac and H2BK33ac. Monoubiquitinated by BRE1 to form H2BK143ub1 and deubiquitinated by UBP26. Required for heterochromatic histone H3 di- and trimethylation at H3K4me. May give a specific tag for epigenetic transcriptional activation.

Its subcellular location is the nucleus. It localises to the chromosome. Core component of nucleosome. Nucleosomes wrap and compact DNA into chromatin, limiting DNA accessibility to the cellular machineries which require DNA as a template. Histones thereby play a central role in transcription regulation, DNA repair, DNA replication and chromosomal stability. DNA accessibility is regulated via a complex set of post-translational modifications of histones, also called histone code, and nucleosome remodeling. The polypeptide is Histone H2B.2 (H2B.2) (Oryza sativa subsp. indica (Rice)).